A 212-amino-acid polypeptide reads, in one-letter code: MAIACAAAPGLRGAEPFNGAALATSAKSSSAMKMSFESEIGAQPPIGFWDPLGLVADADQERFDRLRYVEIKHGRIAMLAVVGHITQQNTRLPGMLSFKENLAFADSPNGVAAFSKIPPLGTLQIILAIGCHELFVVKQVEGSFPGDCTTGGNIFQSAWDNMSEETQASKRAIELNNGRAAQMGILAMMVHEQLSNQPYIINDLAGAAYQFN.

The N-terminal 34 residues, 1 to 34 (MAIACAAAPGLRGAEPFNGAALATSAKSSSAMKM), are a transit peptide targeting the chloroplast. 3 consecutive transmembrane segments (helical) span residues 76-96 (IAMLAVVGHITQQNTRLPGML), 117-137 (IPPLGTLQIILAIGCHELFVV), and 178-198 (GRAAQMGILAMMVHEQLSNQP).

This sequence belongs to the fucoxanthin chlorophyll protein family. As to quaternary structure, the LHC complex of chromophytic algae is composed of fucoxanthin, chlorophyll A and C bound non-covalently by fucoxanthin chlorophyll proteins (FCPs). The ratio of pigments in this LHC is; fucoxanthin: chlorophyll C: chlorophyll A; (0.6-1): (0.1-0.3): (1).

It is found in the plastid. It localises to the chloroplast thylakoid membrane. Its function is as follows. The light-harvesting complex (LHC) functions as a light receptor, it captures and delivers excitation energy to photosystems with which it is closely associated. Energy is transferred from the carotenoid and chlorophyll C (or B) to chlorophyll A and the photosynthetic reaction centers where it is used to synthesize ATP and reducing power. In Macrocystis pyrifera (Giant kelp), this protein is Fucoxanthin-chlorophyll a-c binding protein E, chloroplastic (FCPE).